We begin with the raw amino-acid sequence, 365 residues long: Endophilin-B1 (365 aa).

At M1 the chain carries N-acetylmethionine. The membrane-binding amphipathic helix stretch occupies residues 1–30 (MNIMDFNVKKLAADAGTFLSRAVQFTEEKL). A required for membrane binding region spans residues 1–37 (MNIMDFNVKKLAADAGTFLSRAVQFTEEKLGQAEKTE). Residues 27–261 (EEKLGQAEKT…LGSFPSNYVS (235 aa)) enclose the BAR domain. Position 145 is a phosphothreonine; by CDK5 (T145). Residues 156–185 (KTIAKERKLLQNKRLDLDAAKTRLKKAKAA) adopt a coiled-coil conformation. One can recognise an SH3 domain in the interval 305-365 (SSTRKARVLY…VPITYLELLN (61 aa)).

This sequence belongs to the endophilin family. As to quaternary structure, homodimer, and heterodimer with SH3GLB2. Binds BAX; induction of apoptosis augments BAX binding. Binds DNM1, HTT, AMPH, BIN1 and ARFGAP1. Interacts with UVRAG; UVRAG bridges the interaction to BECN1 indicative for an association with the PI3K complex II (PI3KC3-C2). Phosphorylated at Thr-145 by CDK5; this phosphorylation is required for autophagy induction in starved neurons and facilitates homodimerization. In terms of tissue distribution, expressed in brain, heart, lung and spleen. Low level in liver and testis.

Its subcellular location is the cytoplasm. It is found in the golgi apparatus membrane. The protein localises to the mitochondrion outer membrane. It localises to the cytoplasmic vesicle. The protein resides in the autophagosome membrane. Its subcellular location is the midbody. Its function is as follows. May be required for normal outer mitochondrial membrane dynamics. Required for coatomer-mediated retrograde transport in certain cells. May recruit other proteins to membranes with high curvature. May promote membrane fusion. Involved in activation of caspase-dependent apoptosis by promoting BAX/BAK1 activation. Involved in caspase-independent apoptosis during nutrition starvation and involved in the regulation of autophagy. Activates lipid kinase activity of PIK3C3 during autophagy probably by associating with the PI3K complex II (PI3KC3-C2). Associated with PI3KC3-C2 during autophagy may regulate the trafficking of ATG9A from the Golgi complex to the peripheral cytoplasm for the formation of autophagosomes by inducing Golgi membrane tubulation and fragmentation. Involved in regulation of degradative endocytic trafficking and cytokinesis, probably in the context of PI3KC3-C2. In Rattus norvegicus (Rat), this protein is Endophilin-B1.